The primary structure comprises 371 residues: Queuine tRNA-ribosyltransferase (371 aa).

Asp90 (proton acceptor) is an active-site residue. Residues 90–94 (DSGGF), Asp144, Gln189, and Gly215 contribute to the substrate site. The RNA binding stretch occupies residues 246–252 (GVGTPEN). Asp265 serves as the catalytic Nucleophile. The tract at residues 270–274 (TRNAR) is RNA binding; important for wobble base 34 recognition. Zn(2+) is bound by residues Cys303, Cys305, Cys308, and His334.

The protein belongs to the queuine tRNA-ribosyltransferase family. In terms of assembly, homodimer. Within each dimer, one monomer is responsible for RNA recognition and catalysis, while the other monomer binds to the replacement base PreQ1. The cofactor is Zn(2+).

The enzyme catalyses 7-aminomethyl-7-carbaguanine + guanosine(34) in tRNA = 7-aminomethyl-7-carbaguanosine(34) in tRNA + guanine. It participates in tRNA modification; tRNA-queuosine biosynthesis. Functionally, catalyzes the base-exchange of a guanine (G) residue with the queuine precursor 7-aminomethyl-7-deazaguanine (PreQ1) at position 34 (anticodon wobble position) in tRNAs with GU(N) anticodons (tRNA-Asp, -Asn, -His and -Tyr). Catalysis occurs through a double-displacement mechanism. The nucleophile active site attacks the C1' of nucleotide 34 to detach the guanine base from the RNA, forming a covalent enzyme-RNA intermediate. The proton acceptor active site deprotonates the incoming PreQ1, allowing a nucleophilic attack on the C1' of the ribose to form the product. After dissociation, two additional enzymatic reactions on the tRNA convert PreQ1 to queuine (Q), resulting in the hypermodified nucleoside queuosine (7-(((4,5-cis-dihydroxy-2-cyclopenten-1-yl)amino)methyl)-7-deazaguanosine). This chain is Queuine tRNA-ribosyltransferase, found in Helicobacter pylori (strain G27).